A 106-amino-acid polypeptide reads, in one-letter code: MSLPLFALAALAEIAGCFAFWHVVRAGGSPLWLAPGVLSLVAFAALLTQVEADAAGRAFAAYGGIYILASLGWMWAAEGVRPDRFDALGAAICLAGACVILFAPRG.

4 consecutive transmembrane segments (helical) span residues 4 to 24 (PLFA…WHVV), 27 to 47 (GGSP…AALL), 58 to 78 (AFAA…WAAE), and 84 to 104 (RFDA…LFAP).

The protein belongs to the UPF0060 family.

Its subcellular location is the cell inner membrane. In Azorhizobium caulinodans (strain ATCC 43989 / DSM 5975 / JCM 20966 / LMG 6465 / NBRC 14845 / NCIMB 13405 / ORS 571), this protein is UPF0060 membrane protein AZC_0909.